The sequence spans 59 residues: Insulin (59 aa).

Disulfide bonds link C7-C45, C19-C58, and C44-C49.

The protein belongs to the insulin family. Heterodimer of a B chain and an A chain linked by two disulfide bonds.

It localises to the secreted. Functionally, insulin decreases blood glucose concentration. It increases cell permeability to monosaccharides, amino acids and fatty acids. It accelerates glycolysis, the pentose phosphate cycle, and glycogen synthesis in liver. This Chimaera monstrosa (Rabbit fish) protein is Insulin (ins).